A 1167-amino-acid polypeptide reads, in one-letter code: RNA-directed RNA polymerase (1167 aa).

The region spanning 553 to 735 (LTYGILAEAT…KALASYTGLE (183 aa)) is the RdRp catalytic domain.

It belongs to the reoviridae RNA-directed RNA polymerase family. Interacts with VP3 (Potential). Interacts with VP2 (Potential). Interacts with NSP5; this interaction is probably necessary for the formation of functional virus factories.

It localises to the virion. The enzyme catalyses RNA(n) + a ribonucleoside 5'-triphosphate = RNA(n+1) + diphosphate. RNA-directed RNA polymerase that is involved in both transcription and genome replication. Together with VP3 capping enzyme, forms an enzyme complex positioned near the channels situated at each of the five-fold vertices of the core. Following infection, the outermost layer of the virus is lost, leaving a double-layered particle (DLP) made up of the core and VP6 shell. VP1 then catalyzes the transcription of fully conservative plus-strand genomic RNAs that are extruded through the DLP's channels into the cytoplasm where they function as mRNAs for translation of viral proteins. One copy of each of the viral (+)RNAs is also recruited during core assembly, together with newly synthesized polymerase complexes and VP2. The polymerase of these novo-formed particles catalyzes the synthesis of complementary minus-strands leading to dsDNA formation. To do so, the polymerase specifically recognizes conserved 3' sequence(s) in plus-strand RNA templates. Once dsRNA synthesis is complete, the polymerase switches to the transcriptional mode, thus providing secondary transcription. This is RNA-directed RNA polymerase from Rotavirus X (strain RVX/Human/China/NADRV-J19/1997/GXP[X]) (RV ADRV-N).